Reading from the N-terminus, the 191-residue chain is UPF0669 protein C6orf120 homolog (191 aa).

Residues M1–A30 form the signal peptide. Residue N53 is glycosylated (N-linked (GlcNAc...) asparagine).

Belongs to the UPF0669 family.

Its subcellular location is the secreted. In terms of biological role, may be involved in induction of apoptosis in CD4(+) T-cells, but not CD8(+) T-cells or hepatocytes. In Macaca fascicularis (Crab-eating macaque), this protein is UPF0669 protein C6orf120 homolog.